We begin with the raw amino-acid sequence, 302 residues long: AT-hook motif nuclear-localized protein 29 (302 aa).

The interval 1–95 (MDGGYDQSGG…KPPVIVTRDS (95 aa)) is disordered. The segment covering 32 to 44 (QLHPLPQPQPQPQ) has biased composition (pro residues). The a.T hook DNA-binding region spans 72-84 (KRPRGRPPGSKNK). The PPC domain maps to 96–241 (PNVLRSHVLE…DEGGEGGEGG (146 aa)). The segment at 164–169 (GRFEIL) is required for the binding to non-AHL interactors. The tract at residues 229-279 (PLEDEGGEGGEGGEVGEGGGGEGGPPPATSSSPPSGAGQGQLRGNMSGYDQ) is disordered. Over residues 237–251 (GGEGGEVGEGGGGEG) the composition is skewed to gly residues.

As to quaternary structure, homodimer. Interacts with AHL5, AHL12, AHL25, AHL27, TCP4, TCP13 and EF114. Expressed in the hypocotyl and the vascular tissue of seedling.

The protein localises to the nucleus. Transcription factor that specifically binds AT-rich DNA sequences related to the nuclear matrix attachment regions (MARs). Acts redundantly with AHL18, AHL22 and AHL27 in the regulation of flowering and regulation of the hypocotyl elongation. Acts redundantly with AHL27/ESC to modulate hypocotyl growth inhibition in response to light. The chain is AT-hook motif nuclear-localized protein 29 from Arabidopsis thaliana (Mouse-ear cress).